Consider the following 35-residue polypeptide: Hemocyanin A chain (35 aa).

This sequence belongs to the tyrosinase family. Hemocyanin subfamily. Hemolymph.

The protein resides in the secreted. It is found in the extracellular space. Its function is as follows. Hemocyanins are copper-containing oxygen carriers occurring freely dissolved in the hemolymph of many mollusks and arthropods. This chain is Hemocyanin A chain, found in Cherax destructor (Common yabby crayfish).